The chain runs to 105 residues: Large ribosomal subunit protein uL24 (105 aa).

It belongs to the universal ribosomal protein uL24 family. In terms of assembly, part of the 50S ribosomal subunit.

One of two assembly initiator proteins, it binds directly to the 5'-end of the 23S rRNA, where it nucleates assembly of the 50S subunit. In terms of biological role, one of the proteins that surrounds the polypeptide exit tunnel on the outside of the subunit. The chain is Large ribosomal subunit protein uL24 from Clostridium botulinum (strain Langeland / NCTC 10281 / Type F).